Reading from the N-terminus, the 290-residue chain is Pyridoxal kinase PdxY (290 aa).

Substrate contacts are provided by residues serine 12 and 47–48 (TQ). Residues aspartate 114, glutamate 151, lysine 184, and 211-214 (RPLL) each bind ATP. Aspartate 225 is a binding site for substrate.

Belongs to the pyridoxine kinase family. PdxY subfamily. Homodimer. Mg(2+) is required as a cofactor.

The enzyme catalyses pyridoxal + ATP = pyridoxal 5'-phosphate + ADP + H(+). It participates in cofactor metabolism; pyridoxal 5'-phosphate salvage; pyridoxal 5'-phosphate from pyridoxal: step 1/1. Functionally, pyridoxal kinase involved in the salvage pathway of pyridoxal 5'-phosphate (PLP). Catalyzes the phosphorylation of pyridoxal to PLP. In Pseudomonas fluorescens (strain SBW25), this protein is Pyridoxal kinase PdxY.